Consider the following 355-residue polypeptide: D-alanine--D-alanine ligase (355 aa).

One can recognise an ATP-grasp domain in the interval 143–350; the sequence is KIIFSNLKIP…IEQLVAKLVD (208 aa). An ATP-binding site is contributed by 178–233; sequence LKKLNFPVFVKPSNSGSSLGISKVINKSEIIPALEKARGIDPSILIEEGLEVREIE. The Mg(2+) site is built by D303, E317, and N319.

It belongs to the D-alanine--D-alanine ligase family. Mg(2+) serves as cofactor. Mn(2+) is required as a cofactor.

It localises to the cytoplasm. The catalysed reaction is 2 D-alanine + ATP = D-alanyl-D-alanine + ADP + phosphate + H(+). It participates in cell wall biogenesis; peptidoglycan biosynthesis. Its function is as follows. Cell wall formation. The polypeptide is D-alanine--D-alanine ligase (Prochlorococcus marinus (strain AS9601)).